A 368-amino-acid chain; its full sequence is Glutamate 5-kinase (368 aa).

Residue Lys-13 coordinates ATP. Substrate contacts are provided by Ser-54, Asp-141, and Asn-153. 173-174 (SD) is an ATP binding site. The region spanning 278–355 (RGEITVDAGA…AEIEAVLGYP (78 aa)) is the PUA domain.

It belongs to the glutamate 5-kinase family.

Its subcellular location is the cytoplasm. The enzyme catalyses L-glutamate + ATP = L-glutamyl 5-phosphate + ADP. Its pathway is amino-acid biosynthesis; L-proline biosynthesis; L-glutamate 5-semialdehyde from L-glutamate: step 1/2. Functionally, catalyzes the transfer of a phosphate group to glutamate to form L-glutamate 5-phosphate. This is Glutamate 5-kinase from Dinoroseobacter shibae (strain DSM 16493 / NCIMB 14021 / DFL 12).